A 422-amino-acid chain; its full sequence is Protein phosphatase 1 regulatory subunit 36 (422 aa).

As to quaternary structure, interacts with PPP1CA.

Inhibits phosphatase activity of protein phosphatase 1 (PP1) complexes. The chain is Protein phosphatase 1 regulatory subunit 36 (PPP1R36) from Homo sapiens (Human).